Here is a 375-residue protein sequence, read N- to C-terminus: Actin, cytoplasmic (375 aa).

This sequence belongs to the actin family.

The protein resides in the cytoplasm. It is found in the cytoskeleton. The catalysed reaction is ATP + H2O = ADP + phosphate + H(+). Actins are highly conserved proteins that are involved in various types of cell motility and are ubiquitously expressed in all eukaryotic cells. This Oxytricha trifallax (Sterkiella histriomuscorum) protein is Actin, cytoplasmic.